Reading from the N-terminus, the 63-residue chain is UPF0434 protein BAV2101 (63 aa).

This sequence belongs to the UPF0434 family.

The chain is UPF0434 protein BAV2101 from Bordetella avium (strain 197N).